We begin with the raw amino-acid sequence, 483 residues long: Ero1-like protein (483 aa).

An N-terminal signal peptide occupies residues 1-29 (MTTRTVQRNLWASAAVVLVLLLLWTDTTG). 6 cysteine pairs are disulfide-bonded: C44-C57, C46-C55, C94-C402, C103-C108, C227-C251, and C405-C408. 3 residues coordinate FAD: R206, T208, and W219. The N-linked (GlcNAc...) asparagine glycan is linked to N232. 3 residues coordinate FAD: S262, H265, and R301. An N-linked (GlcNAc...) asparagine glycan is attached at N395.

Belongs to the EROs family. May function both as a monomer and a homodimer. FAD is required as a cofactor.

It localises to the endoplasmic reticulum membrane. In terms of biological role, oxidoreductase involved in disulfide bond formation in the endoplasmic reticulum. Efficiently reoxidizes pdi-1, the enzyme catalyzing protein disulfide formation, in order to allow pdi-1 to sustain additional rounds of disulfide formation. Following pdi reoxidation, passes its electrons to molecular oxygen via FAD, leading to the production of reactive oxygen species (ROS) in the cell. In Drosophila melanogaster (Fruit fly), this protein is Ero1-like protein (Ero1L).